Reading from the N-terminus, the 462-residue chain is ATP-dependent protease ATPase subunit HslU (462 aa).

ATP contacts are provided by residues I21, 63-68 (GVGKTE), D275, E340, and R412.

It belongs to the ClpX chaperone family. HslU subfamily. In terms of assembly, a double ring-shaped homohexamer of HslV is capped on each side by a ring-shaped HslU homohexamer. The assembly of the HslU/HslV complex is dependent on binding of ATP.

The protein resides in the cytoplasm. In terms of biological role, ATPase subunit of a proteasome-like degradation complex; this subunit has chaperone activity. The binding of ATP and its subsequent hydrolysis by HslU are essential for unfolding of protein substrates subsequently hydrolyzed by HslV. HslU recognizes the N-terminal part of its protein substrates and unfolds these before they are guided to HslV for hydrolysis. This is ATP-dependent protease ATPase subunit HslU from Pseudothermotoga lettingae (strain ATCC BAA-301 / DSM 14385 / NBRC 107922 / TMO) (Thermotoga lettingae).